The chain runs to 458 residues: Sphingomyelinase DDB_G0288017 (458 aa).

A disordered region spans residues 91–111 (NKKAKSPPPPSSLKQQNLHNN). Glu135 serves as a coordination point for Mg(2+). Catalysis depends on His447, which acts as the Proton acceptor.

The protein belongs to the neutral sphingomyelinase family. Requires Mg(2+) as cofactor.

The enzyme catalyses a sphingomyelin + H2O = phosphocholine + an N-acylsphing-4-enine + H(+). The protein operates within lipid metabolism; sphingolipid metabolism. Catalyzes the hydrolysis of sphingomyelin to form ceramide and phosphocholine. This Dictyostelium discoideum (Social amoeba) protein is Sphingomyelinase DDB_G0288017.